A 391-amino-acid chain; its full sequence is MSVINLLDLDLSSKRVLIRQDLNVSISNWIVTSDKRIKASLPTIKIALKQGAKVMLMSHRGRPIEGEPSDEFSLQPVADRLSELLNTTVRLEKDWLNGVQMNNGEVVLCENVRFNAGEMANDDNLSKRMALMCDIFVMDAFGTAHRAQASTHGVAKYAPIACSGPLLSGELDALGKVLDNPKRPMVAIVGGSKVSTKLTVLESLSKIVDQLVVGGGIANTFIAAQGFNVGKSLCEHDLIPMAKKLMEDCEIPVPTDVVCGKEFSETAEAQTKASTEVSDDDMIFDIGPESIKQLAKIMENAGTIVWNGPVGVFEFEQFASGTKTLGKAIAESDAFSIAGGGDTLAAVDKYGIEDKINYISTGGGAFLEFLEGKILPAVEILEQRASGVDFA.

Substrate contacts are provided by residues 21-23 (DLN), arginine 36, 59-62 (HRGR), arginine 113, and arginine 146. Residues lysine 197, glutamate 314, and 340–343 (GGDT) contribute to the ATP site.

The protein belongs to the phosphoglycerate kinase family. Monomer.

It is found in the cytoplasm. It catalyses the reaction (2R)-3-phosphoglycerate + ATP = (2R)-3-phospho-glyceroyl phosphate + ADP. It functions in the pathway carbohydrate degradation; glycolysis; pyruvate from D-glyceraldehyde 3-phosphate: step 2/5. This Ruthia magnifica subsp. Calyptogena magnifica protein is Phosphoglycerate kinase.